A 238-amino-acid polypeptide reads, in one-letter code: Ribonuclease PH (238 aa).

Phosphate is bound by residues R86 and 124-126; that span reads GTR.

The protein belongs to the RNase PH family. Homohexameric ring arranged as a trimer of dimers.

It carries out the reaction tRNA(n+1) + phosphate = tRNA(n) + a ribonucleoside 5'-diphosphate. Phosphorolytic 3'-5' exoribonuclease that plays an important role in tRNA 3'-end maturation. Removes nucleotide residues following the 3'-CCA terminus of tRNAs; can also add nucleotides to the ends of RNA molecules by using nucleoside diphosphates as substrates, but this may not be physiologically important. Probably plays a role in initiation of 16S rRNA degradation (leading to ribosome degradation) during starvation. This is Ribonuclease PH from Pectobacterium atrosepticum (strain SCRI 1043 / ATCC BAA-672) (Erwinia carotovora subsp. atroseptica).